We begin with the raw amino-acid sequence, 330 residues long: 4-hydroxythreonine-4-phosphate dehydrogenase (330 aa).

Residue T133 coordinates substrate. H161, H206, and H261 together coordinate a divalent metal cation. Substrate is bound by residues K269, N278, and R287.

It belongs to the PdxA family. Homodimer. Requires Zn(2+) as cofactor. It depends on Mg(2+) as a cofactor. Co(2+) serves as cofactor.

The protein localises to the cytoplasm. The catalysed reaction is 4-(phosphooxy)-L-threonine + NAD(+) = 3-amino-2-oxopropyl phosphate + CO2 + NADH. It functions in the pathway cofactor biosynthesis; pyridoxine 5'-phosphate biosynthesis; pyridoxine 5'-phosphate from D-erythrose 4-phosphate: step 4/5. Catalyzes the NAD(P)-dependent oxidation of 4-(phosphooxy)-L-threonine (HTP) into 2-amino-3-oxo-4-(phosphooxy)butyric acid which spontaneously decarboxylates to form 3-amino-2-oxopropyl phosphate (AHAP). The sequence is that of 4-hydroxythreonine-4-phosphate dehydrogenase from Xylella fastidiosa (strain 9a5c).